Reading from the N-terminus, the 320-residue chain is Acetyl-coenzyme A carboxylase carboxyl transferase subunit alpha (320 aa).

Residues 41–295 (RIEEKAGQAL…GEAIAQAFDE (255 aa)) enclose the CoA carboxyltransferase C-terminal domain.

The protein belongs to the AccA family. As to quaternary structure, acetyl-CoA carboxylase is a heterohexamer composed of biotin carboxyl carrier protein (AccB), biotin carboxylase (AccC) and two subunits each of ACCase subunit alpha (AccA) and ACCase subunit beta (AccD).

The protein resides in the cytoplasm. The enzyme catalyses N(6)-carboxybiotinyl-L-lysyl-[protein] + acetyl-CoA = N(6)-biotinyl-L-lysyl-[protein] + malonyl-CoA. The protein operates within lipid metabolism; malonyl-CoA biosynthesis; malonyl-CoA from acetyl-CoA: step 1/1. Its function is as follows. Component of the acetyl coenzyme A carboxylase (ACC) complex. First, biotin carboxylase catalyzes the carboxylation of biotin on its carrier protein (BCCP) and then the CO(2) group is transferred by the carboxyltransferase to acetyl-CoA to form malonyl-CoA. This is Acetyl-coenzyme A carboxylase carboxyl transferase subunit alpha from Bradyrhizobium sp. (strain BTAi1 / ATCC BAA-1182).